Consider the following 159-residue polypeptide: Large ribosomal subunit protein uL11 (159 aa).

The protein belongs to the universal ribosomal protein uL11 family. Part of the ribosomal stalk of the 50S ribosomal subunit. Interacts with L10 and the large rRNA to form the base of the stalk. L10 forms an elongated spine to which L12 dimers bind in a sequential fashion forming a multimeric L10(L12)X complex.

In terms of biological role, forms part of the ribosomal stalk which helps the ribosome interact with GTP-bound translation factors. This chain is Large ribosomal subunit protein uL11, found in Methanococcus maripaludis (strain DSM 14266 / JCM 13030 / NBRC 101832 / S2 / LL).